The chain runs to 444 residues: Tubulin beta-8 chain (444 aa).

An MREI motif motif is present at residues 1–4 (MREI). GTP contacts are provided by Gln11, Glu69, Ser138, Gly142, Thr143, and Gly144. Glu69 is a Mg(2+) binding site. Ser172 is subject to Phosphoserine; by CDK1. Asn204 and Asn226 together coordinate GTP. Positions 423 to 444 (QQYQDATAEEEEDEEYAEEEVA) are disordered. The segment covering 429–444 (TAEEEEDEEYAEEEVA) has biased composition (acidic residues). Glu436 bears the 5-glutamyl polyglutamate mark.

It belongs to the tubulin family. As to quaternary structure, dimer of alpha and beta chains. A typical microtubule is a hollow water-filled tube with an outer diameter of 25 nm and an inner diameter of 15 nM. Alpha-beta heterodimers associate head-to-tail to form protofilaments running lengthwise along the microtubule wall with the beta-tubulin subunit facing the microtubule plus end conferring a structural polarity. Microtubules usually have 13 protofilaments but different protofilament numbers can be found in some organisms and specialized cells. Requires Mg(2+) as cofactor. Post-translationally, some glutamate residues at the C-terminus are polyglutamylated, resulting in polyglutamate chains on the gamma-carboxyl group. Polyglutamylation plays a key role in microtubule severing by spastin (SPAST). SPAST preferentially recognizes and acts on microtubules decorated with short polyglutamate tails: severing activity by SPAST increases as the number of glutamates per tubulin rises from one to eight, but decreases beyond this glutamylation threshold. Glutamylation is also involved in cilia motility. Some glutamate residues at the C-terminus are monoglycylated but not polyglycylated due to the absence of functional TTLL10 in human. Monoglycylation is mainly limited to tubulin incorporated into cilia and flagella axonemes, which is required for their stability and maintenance. Flagella glycylation controls sperm motility. Both polyglutamylation and monoglycylation can coexist on the same protein on adjacent residues, and lowering glycylation levels increases polyglutamylation, and reciprocally. In terms of processing, phosphorylated on Ser-172 by CDK1 during the cell cycle, from metaphase to telophase, but not in interphase. This phosphorylation inhibits tubulin incorporation into microtubules. In terms of tissue distribution, expressed at a high level in oocytes, at different stages of development.

It localises to the cytoplasm. It is found in the cytoskeleton. The protein resides in the spindle. Functionally, tubulin is the major constituent of microtubules, a cylinder consisting of laterally associated linear protofilaments composed of alpha- and beta-tubulin heterodimers. Microtubules grow by the addition of GTP-tubulin dimers to the microtubule end, where a stabilizing cap forms. Below the cap, tubulin dimers are in GDP-bound state, owing to GTPase activity of alpha-tubulin. TUBB8 has a key role in meiotic spindle assembly and oocyte maturation. The protein is Tubulin beta-8 chain of Homo sapiens (Human).